The sequence spans 174 residues: NADH-quinone oxidoreductase subunit I (174 aa).

4Fe-4S ferredoxin-type domains lie at 44-74 (LNRY…VEGD) and 90-119 (RVYQ…MTND). [4Fe-4S] cluster is bound by residues Cys-54, Cys-57, Cys-60, Cys-64, Cys-99, Cys-102, Cys-105, and Cys-109.

This sequence belongs to the complex I 23 kDa subunit family. NDH-1 is composed of 14 different subunits. Subunits NuoA, H, J, K, L, M, N constitute the membrane sector of the complex. The cofactor is [4Fe-4S] cluster.

It is found in the cell membrane. It carries out the reaction a quinone + NADH + 5 H(+)(in) = a quinol + NAD(+) + 4 H(+)(out). Functionally, NDH-1 shuttles electrons from NADH, via FMN and iron-sulfur (Fe-S) centers, to quinones in the respiratory chain. The immediate electron acceptor for the enzyme in this species is believed to be menaquinone. Couples the redox reaction to proton translocation (for every two electrons transferred, four hydrogen ions are translocated across the cytoplasmic membrane), and thus conserves the redox energy in a proton gradient. The chain is NADH-quinone oxidoreductase subunit I from Mycobacterium sp. (strain JLS).